Here is a 294-residue protein sequence, read N- to C-terminus: Bidirectional sugar transporter SWEET13 (294 aa).

The Extracellular segment spans residues 1–7; sequence MALTNNL. A helical membrane pass occupies residues 8-28; that stretch reads WAFVFGILGNIISFVVFLAPV. Residues 10 to 97 enclose the MtN3/slv 1 domain; sequence FVFGILGNII…VLFVSYANKK (88 aa). At 29–42 the chain is on the cytoplasmic side; the sequence is PTFVRICKKKSTEG. A helical transmembrane segment spans residues 43-63; it reads FQSLPYVSALFSAMLWIYYAM. Over 64 to 69 the chain is Extracellular; that stretch reads QKDGTA. The helical transmembrane segment at 70–90 threads the bilayer; sequence FLLITINAFGCVIETIYIVLF. The Cytoplasmic segment spans residues 91-104; it reads VSYANKKTRISTLK. Residues 105–125 traverse the membrane as a helical segment; sequence VLGLLNFLGFAAIVLVCELLT. Over 126-132 the chain is Extracellular; sequence KGSTREK. Residues 133-153 traverse the membrane as a helical segment; the sequence is VLGGICVGFSVSVFAAPLSIM. A MtN3/slv 2 domain is found at 133-216; it reads VLGGICVGFS…MILYIIFKYY (84 aa). Topologically, residues 154–166 are cytoplasmic; the sequence is RVVVRTRSVEFMP. Residues 167-187 traverse the membrane as a helical segment; sequence FSLSLFLTISAVTWLFYGLAI. Residues 188 to 192 lie on the Extracellular side of the membrane; the sequence is KDFYV. The helical transmembrane segment at 193–213 threads the bilayer; the sequence is ALPNVLGAFLGAVQMILYIIF. Topologically, residues 214 to 294 are cytoplasmic; that stretch reads KYYKTPVAQK…NKDVQKQSQV (81 aa). The tract at residues 273-294 is disordered; that stretch reads KSQNMTDPKDQINKDVQKQSQV. Residues 279 to 294 show a composition bias toward basic and acidic residues; the sequence is DPKDQINKDVQKQSQV.

Belongs to the SWEET sugar transporter family. Forms heterooligomers with SWEET1, SWEET3, SWEET6, SWEET7, SWEET8, SWEET9, SWEET11 and SWEET17. Expressed at low levels in leaves.

The protein resides in the cell membrane. In terms of biological role, mediates both low-affinity uptake and efflux of sugar across the plasma membrane. Involved in nurturing the male gametophyte. This Arabidopsis thaliana (Mouse-ear cress) protein is Bidirectional sugar transporter SWEET13.